We begin with the raw amino-acid sequence, 252 residues long: Imidazole glycerol phosphate synthase subunit HisF (252 aa).

Residues Asp-11 and Asp-130 contribute to the active site.

It belongs to the HisA/HisF family. In terms of assembly, heterodimer of HisH and HisF.

Its subcellular location is the cytoplasm. The enzyme catalyses 5-[(5-phospho-1-deoxy-D-ribulos-1-ylimino)methylamino]-1-(5-phospho-beta-D-ribosyl)imidazole-4-carboxamide + L-glutamine = D-erythro-1-(imidazol-4-yl)glycerol 3-phosphate + 5-amino-1-(5-phospho-beta-D-ribosyl)imidazole-4-carboxamide + L-glutamate + H(+). It participates in amino-acid biosynthesis; L-histidine biosynthesis; L-histidine from 5-phospho-alpha-D-ribose 1-diphosphate: step 5/9. Its function is as follows. IGPS catalyzes the conversion of PRFAR and glutamine to IGP, AICAR and glutamate. The HisF subunit catalyzes the cyclization activity that produces IGP and AICAR from PRFAR using the ammonia provided by the HisH subunit. The chain is Imidazole glycerol phosphate synthase subunit HisF from Thermococcus gammatolerans (strain DSM 15229 / JCM 11827 / EJ3).